The chain runs to 172 residues: S-ribosylhomocysteine lyase (172 aa).

Fe cation contacts are provided by His54, His58, and Cys128.

The protein belongs to the LuxS family. Homodimer. Fe cation is required as a cofactor.

It catalyses the reaction S-(5-deoxy-D-ribos-5-yl)-L-homocysteine = (S)-4,5-dihydroxypentane-2,3-dione + L-homocysteine. Functionally, involved in the synthesis of autoinducer 2 (AI-2) which is secreted by bacteria and is used to communicate both the cell density and the metabolic potential of the environment. The regulation of gene expression in response to changes in cell density is called quorum sensing. Catalyzes the transformation of S-ribosylhomocysteine (RHC) to homocysteine (HC) and 4,5-dihydroxy-2,3-pentadione (DPD). This chain is S-ribosylhomocysteine lyase, found in Vibrio cholerae serotype O1 (strain ATCC 39541 / Classical Ogawa 395 / O395).